The following is a 252-amino-acid chain: H-2 class II histocompatibility antigen, A-F beta chain (252 aa).

An N-terminal signal peptide occupies residues Ala1–Gly16. Residues Gly17–Leu109 form a beta-1 region. Topologically, residues Gly17–Lys213 are extracellular. Cystine bridges form between Cys31–Cys93 and Cys132–Cys188. N-linked (GlcNAc...) asparagine glycosylation is present at Asn35. Residues Glu110 to Trp203 are beta-2. The 89-residue stretch at Pro112–Thr200 folds into the Ig-like C1-type domain. Residues Arg204–Lys213 form a connecting peptide region. A helical transmembrane segment spans residues Met214–Ile234. Over Arg235–Gln252 the chain is Cytoplasmic.

This sequence belongs to the MHC class II family. Ubiquitinated in immature dendritic cells leading to down-regulation of MHC class II.

Its subcellular location is the membrane. The protein is H-2 class II histocompatibility antigen, A-F beta chain (H2-Ab1) of Mus musculus (Mouse).